The following is a 201-amino-acid chain: uncharacterized protein (201 aa).

The disordered stretch occupies residues 1 to 22; sequence MAASKAAKSSEDRAGGGGGGGG.

This is an uncharacterized protein from Tomato ringspot virus (isolate raspberry) (ToRSV).